Here is a 104-residue protein sequence, read N- to C-terminus: MTEHNHNHDVELDISNEEELLTLFDENGNEVLYRKMLEFYHPEFKKEYVILAEEGAQSDDDDMIELIPMINEPDESGDGGKLVPIETDEEWDMIEEVVNTNMEE.

This sequence belongs to the UPF0473 family.

The protein is UPF0473 protein SH1304 of Staphylococcus haemolyticus (strain JCSC1435).